A 150-amino-acid polypeptide reads, in one-letter code: Guanine nucleotide-binding protein subunit gamma 2 (150 aa).

The span at Met1–Gln11 shows a compositional bias: acidic residues. The tract at residues Met1–Arg59 is disordered. Residues Gly65 to Ser97 adopt a coiled-coil conformation. The region spanning Ala71–Arg137 is the G protein gamma domain.

In terms of assembly, g proteins are composed of 3 units, alpha, beta and gamma. Interacts with the beta subunit RGB1.

The protein localises to the cell membrane. Functionally, guanine nucleotide-binding proteins (G proteins) are involved as modulators or transducers in various transmembrane signaling systems. In Oryza sativa subsp. indica (Rice), this protein is Guanine nucleotide-binding protein subunit gamma 2.